The chain runs to 436 residues: 3-ketoacyl-CoA thiolase (436 aa).

Catalysis depends on Cys99, which acts as the Acyl-thioester intermediate. Active-site proton acceptor residues include His392 and Cys422.

Belongs to the thiolase-like superfamily. Thiolase family. In terms of assembly, heterotetramer of two alpha chains (FadJ) and two beta chains (FadI).

The protein resides in the cytoplasm. It catalyses the reaction an acyl-CoA + acetyl-CoA = a 3-oxoacyl-CoA + CoA. It participates in lipid metabolism; fatty acid beta-oxidation. Functionally, catalyzes the final step of fatty acid oxidation in which acetyl-CoA is released and the CoA ester of a fatty acid two carbons shorter is formed. The chain is 3-ketoacyl-CoA thiolase from Escherichia coli (strain ATCC 8739 / DSM 1576 / NBRC 3972 / NCIMB 8545 / WDCM 00012 / Crooks).